The chain runs to 195 residues: MPRTAAVTRTTKETDITVRLDLDAAPYEQPATGHGFFDHMLDALARHSRLGISISGTGDLHIEPHHLIEDTGITLGQALSQALGDRKGIERYGSAFVPMDETLAHVVLDLSGRAHLAFEPETLDVYGDAGGMTHYHLREFLRGFCNHAGATLHVRLLAGREAHHVIEAVMKAFARALRDAVAVTSDALPSTKGSL.

The protein belongs to the imidazoleglycerol-phosphate dehydratase family.

The protein localises to the cytoplasm. It carries out the reaction D-erythro-1-(imidazol-4-yl)glycerol 3-phosphate = 3-(imidazol-4-yl)-2-oxopropyl phosphate + H2O. The protein operates within amino-acid biosynthesis; L-histidine biosynthesis; L-histidine from 5-phospho-alpha-D-ribose 1-diphosphate: step 6/9. This Deinococcus radiodurans (strain ATCC 13939 / DSM 20539 / JCM 16871 / CCUG 27074 / LMG 4051 / NBRC 15346 / NCIMB 9279 / VKM B-1422 / R1) protein is Imidazoleglycerol-phosphate dehydratase.